Reading from the N-terminus, the 418-residue chain is MNIFEELKARGLVFQTTDEQALVKALTEGQVSYYTGYDPTADSLHLGHLVAILTSRRLQLAGHKPYALVGGATGLIGDPSFKDAERSLQTKETVLEWSDKIKGQLSTFLDFENGDNKAELVNNYDWFSQISFIDFLRDVGKYFTVNYMMSKDSVKKRIETGISYTEFAYQIMQGYDFYELNDKHNVTLQIGGSDQWGNMTAGTELLRKKADKTGHVMTVPLITDSTGKKFGKSEGNAVWLDADKTSPYEMYQFWLNVMDDDAVRFLKIFTFLSLDEIAEIETQFNAARHERLAQKTLAREVVTLVHGEEAYKQALNITEQLFAGNIKNLSANELKQGLSNVPNYHVQSIDNHNIVEILVAAKISPSKRQAREDVQNGAIYINGDRVQDLDYQLSNDDKIDDQLTVIRRGKKKYAVLTY.

Y34 contacts L-tyrosine. Residues 39 to 48 (PTADSLHLGH) carry the 'HIGH' region motif. Y169 and Q173 together coordinate L-tyrosine. The 'KMSKS' region motif lies at 229–233 (KFGKS). K232 serves as a coordination point for ATP. One can recognise an S4 RNA-binding domain in the interval 352–418 (HNIVEILVAA…GKKKYAVLTY (67 aa)).

Belongs to the class-I aminoacyl-tRNA synthetase family. TyrS type 1 subfamily. In terms of assembly, homodimer.

It localises to the cytoplasm. The catalysed reaction is tRNA(Tyr) + L-tyrosine + ATP = L-tyrosyl-tRNA(Tyr) + AMP + diphosphate + H(+). Its function is as follows. Catalyzes the attachment of tyrosine to tRNA(Tyr) in a two-step reaction: tyrosine is first activated by ATP to form Tyr-AMP and then transferred to the acceptor end of tRNA(Tyr). In Streptococcus pyogenes serotype M1, this protein is Tyrosine--tRNA ligase.